Reading from the N-terminus, the 152-residue chain is HTH-type transcriptional regulator SlrR (152 aa).

In terms of domain architecture, HTH cro/C1-type spans 6–61 (IRLYRKRKGYSINQLAVESGVSKSYLSKIERGVHTNPSVQFLKKVSATLEVELTEL). The H-T-H motif DNA-binding region spans 17-36 (INQLAVESGVSKSYLSKIER). A Sin domain is found at 113–151 (YRNRKLTESNIEEWKALMAEAREIGLSVHEVKSFLKTKG).

Component of the SlrR/SlrA complex.

Functionally, represses sigma(D)-dependent flagellar genes and activate the eps and yqxM operons. Repressor activity is regulated by SlrA. Controls the initiation of biofilm formation. This is HTH-type transcriptional regulator SlrR (slrR) from Bacillus subtilis (strain 168).